The sequence spans 318 residues: NADH-ubiquinone oxidoreductase chain 1 (318 aa).

The next 8 membrane-spanning stretches (helical) occupy residues 2 to 22, 69 to 89, 102 to 122, 146 to 166, 171 to 191, 222 to 242, 253 to 273, and 294 to 314; these read FLIN…FLTL, FLFT…WAPL, LLFI…SGWA, MTTI…TAFA, HLWL…STLA, LFFM…VILF, EIST…FLWV, and LPLT…LACI.

The protein belongs to the complex I subunit 1 family.

The protein resides in the mitochondrion inner membrane. It carries out the reaction a ubiquinone + NADH + 5 H(+)(in) = a ubiquinol + NAD(+) + 4 H(+)(out). Core subunit of the mitochondrial membrane respiratory chain NADH dehydrogenase (Complex I) that is believed to belong to the minimal assembly required for catalysis. Complex I functions in the transfer of electrons from NADH to the respiratory chain. The immediate electron acceptor for the enzyme is believed to be ubiquinone. The polypeptide is NADH-ubiquinone oxidoreductase chain 1 (MT-ND1) (Loxodonta africana (African elephant)).